A 76-amino-acid chain; its full sequence is MKKDIHPDYHSITVQLVDGTTYQTRSTYGSAGDTLQLDIDPSVHPAWTGGKSHMLDAGGQVARFNKRFGGLTLGKK.

Belongs to the bacterial ribosomal protein bL31 family. Type A subfamily. Part of the 50S ribosomal subunit.

Its function is as follows. Binds the 23S rRNA. The sequence is that of Large ribosomal subunit protein bL31 from Rhizorhabdus wittichii (strain DSM 6014 / CCUG 31198 / JCM 15750 / NBRC 105917 / EY 4224 / RW1) (Sphingomonas wittichii).